We begin with the raw amino-acid sequence, 374 residues long: Large ribosomal subunit protein uL4 (374 aa).

The tract at residues 336–355 is disordered; that stretch reads EKAMAKGMQNKKNREARHAA.

This sequence belongs to the universal ribosomal protein uL4 family.

The polypeptide is Large ribosomal subunit protein uL4 (RPL4) (Trypanosoma brucei brucei).